Reading from the N-terminus, the 251-residue chain is Ell1-associated factor 1 (251 aa).

Disordered stretches follow at residues 110–187 (SKTV…DMEV) and 201–251 (FDQE…EDED). Over residues 112-123 (TVPSNAITQSDN) the composition is skewed to polar residues. The span at 124 to 135 (SQISESKSTSQS) shows a compositional bias: low complexity. Positions 143–157 (RRKEKELEASKDGKI) are enriched in basic and acidic residues. Composition is skewed to polar residues over residues 204–220 (EFNSIDDPSTVSQTASK) and 236–251 (SSAQAEGISSASEDED). Residue serine 247 is modified to Phosphoserine.

It belongs to the EAF family. Forms a stable heterodimer with ell1. Ell1-eaf1 complex interacts with RNA polymerase II.

It localises to the nucleus. In terms of biological role, activates transcription elongation by RNA polymerase II and pyrophosphorolysis as a complex with ell1. Acts as a transcriptional transactivator of ell1 elongation activities. The chain is Ell1-associated factor 1 (eaf1) from Schizosaccharomyces pombe (strain 972 / ATCC 24843) (Fission yeast).